A 122-amino-acid chain; its full sequence is Basic phospholipase A2 (122 aa).

7 disulfide bridges follow: cysteine 26/cysteine 115, cysteine 28/cysteine 44, cysteine 43/cysteine 95, cysteine 49/cysteine 122, cysteine 50/cysteine 88, cysteine 57/cysteine 81, and cysteine 75/cysteine 86. The Ca(2+) site is built by tyrosine 27, glycine 29, and glycine 31. Histidine 47 is a catalytic residue. Aspartate 48 lines the Ca(2+) pocket. The active site involves aspartate 89.

This sequence belongs to the phospholipase A2 family. Group II subfamily. D49 sub-subfamily. Requires Ca(2+) as cofactor. In terms of tissue distribution, expressed by the venom gland.

The protein resides in the secreted. The enzyme catalyses a 1,2-diacyl-sn-glycero-3-phosphocholine + H2O = a 1-acyl-sn-glycero-3-phosphocholine + a fatty acid + H(+). Snake venom phospholipase A2 (PLA2) that does not inhibit platelet aggregation. Exhibits cytotoxic and anticoagulant activity. Induces Ehrlich tumor growth but not angiogenesis. PLA2 catalyzes the calcium-dependent hydrolysis of the 2-acyl groups in 3-sn-phosphoglycerides. The sequence is that of Basic phospholipase A2 from Bothrops leucurus (Whitetail lancehead).